The sequence spans 77 residues: MFFSPSVVNVGGFKINTMDRGSSLTLGPYQQVDYFLSAKINQGFGEENGDFTPLVVPISNVLDADLVDSNSAKNSVV.

This is an uncharacterized protein from Bacillus subtilis (strain 168).